We begin with the raw amino-acid sequence, 521 residues long: Na(+)/H(+) antiporter ApNhaP (521 aa).

Topologically, residues methionine 1 to glutamine 18 are periplasmic. Residues phenylalanine 19 to phenylalanine 39 form a helical membrane-spanning segment. Residues arginine 40–glutamine 41 lie on the Cytoplasmic side of the membrane. A helical membrane pass occupies residues isoleucine 42 to leucine 62. Topologically, residues valine 63–asparagine 94 are periplasmic. Residues leucine 95–phenylalanine 115 form a helical membrane-spanning segment. Topologically, residues serine 116–proline 126 are cytoplasmic. The chain crosses the membrane as a helical span at residues isoleucine 127 to phenylalanine 147. The Periplasmic portion of the chain corresponds to arginine 148–serine 164. A helical membrane pass occupies residues leucine 165–threonine 185. At glutamine 186–leucine 194 the chain is on the cytoplasmic side. The helical transmembrane segment at isoleucine 195 to isoleucine 215 threads the bilayer. Over serine 216–glutamate 245 the chain is Periplasmic. A helical membrane pass occupies residues leucine 246–serine 266. Residues arginine 267 to leucine 276 lie on the Cytoplasmic side of the membrane. Residues leucine 277–isoleucine 297 form a helical membrane-spanning segment. The Periplasmic portion of the chain corresponds to glycine 298–glutamine 311. A helical transmembrane segment spans residues leucine 312–glycine 332. Residues threonine 333–threonine 349 lie on the Cytoplasmic side of the membrane. Residues valine 350 to valine 370 traverse the membrane as a helical segment. Over methionine 371 to glutamate 380 the chain is Periplasmic. Residues alanine 381–isoleucine 401 form a helical membrane-spanning segment. At glutamate 402–glutamate 521 the chain is on the cytoplasmic side.

Belongs to the monovalent cation:proton antiporter 1 (CPA1) transporter (TC 2.A.36) family.

It localises to the cell inner membrane. In terms of biological role, na(+)/H(+) antiporter that extrudes sodium in exchange for external protons. Also shows high Ca(2+)/H(+) antiporter activity at alkaline pH. Does not catalyze exchange between Li(+) and H(+). In Aphanothece halophytica, this protein is Na(+)/H(+) antiporter ApNhaP (apnhaP).